Consider the following 467-residue polypeptide: 3-isopropylmalate dehydratase large subunit (467 aa).

[4Fe-4S] cluster is bound by residues Cys-347, Cys-407, and Cys-410.

This sequence belongs to the aconitase/IPM isomerase family. LeuC type 1 subfamily. In terms of assembly, heterodimer of LeuC and LeuD. Requires [4Fe-4S] cluster as cofactor.

It catalyses the reaction (2R,3S)-3-isopropylmalate = (2S)-2-isopropylmalate. It participates in amino-acid biosynthesis; L-leucine biosynthesis; L-leucine from 3-methyl-2-oxobutanoate: step 2/4. Its function is as follows. Catalyzes the isomerization between 2-isopropylmalate and 3-isopropylmalate, via the formation of 2-isopropylmaleate. In Nostoc sp. (strain PCC 7120 / SAG 25.82 / UTEX 2576), this protein is 3-isopropylmalate dehydratase large subunit.